We begin with the raw amino-acid sequence, 244 residues long: Type III pantothenate kinase (244 aa).

ATP is bound at residue 7–14 (DIGNTRLK). Residues Tyr95 and 102–105 (GIDR) contribute to the substrate site. The active-site Proton acceptor is the Asp104. Thr126 serves as a coordination point for ATP. Thr177 is a binding site for substrate.

It belongs to the type III pantothenate kinase family. In terms of assembly, homodimer. NH4(+) is required as a cofactor. The cofactor is K(+).

The protein resides in the cytoplasm. It carries out the reaction (R)-pantothenate + ATP = (R)-4'-phosphopantothenate + ADP + H(+). It functions in the pathway cofactor biosynthesis; coenzyme A biosynthesis; CoA from (R)-pantothenate: step 1/5. Catalyzes the phosphorylation of pantothenate (Pan), the first step in CoA biosynthesis. This chain is Type III pantothenate kinase, found in Acinetobacter baumannii (strain AB307-0294).